The following is a 34-amino-acid chain: MEVNILGLIATTLFILIPTSFLLILYVKTASQEE.

A helical membrane pass occupies residues 5 to 25; that stretch reads ILGLIATTLFILIPTSFLLIL.

This sequence belongs to the PsbM family. In terms of assembly, PSII is composed of 1 copy each of membrane proteins PsbA, PsbB, PsbC, PsbD, PsbE, PsbF, PsbH, PsbI, PsbJ, PsbK, PsbL, PsbM, PsbT, PsbX, PsbY, PsbZ, Psb30/Ycf12, at least 3 peripheral proteins of the oxygen-evolving complex and a large number of cofactors. It forms dimeric complexes.

It localises to the plastid. It is found in the chloroplast thylakoid membrane. Its function is as follows. One of the components of the core complex of photosystem II (PSII). PSII is a light-driven water:plastoquinone oxidoreductase that uses light energy to abstract electrons from H(2)O, generating O(2) and a proton gradient subsequently used for ATP formation. It consists of a core antenna complex that captures photons, and an electron transfer chain that converts photonic excitation into a charge separation. This subunit is found at the monomer-monomer interface. This is Photosystem II reaction center protein M from Pleurastrum terricola (Filamentous green alga).